A 126-amino-acid chain; its full sequence is uncharacterized protein (126 aa).

At 1–28 the chain is on the cytoplasmic side; the sequence is MAGEAVSEHTPDSQEVTVTSVVCCLDSV. A helical transmembrane segment spans residues 29–49; the sequence is VEIGHHVVYSVVTPLIVAVLI. The Extracellular portion of the chain corresponds to 50–75; it reads DTMAGEAVLEHTSDSQEEIVTTVVCS. The chain crosses the membrane as a helical span at residues 76–96; it reads VVPLVCFVVSVVCFVISVVEI. A topological domain (cytoplasmic) is located at residue G97. Residues 98–118 traverse the membrane as a helical segment; sequence HHVVYSVVAPLTVTVAVETIA. The Extracellular portion of the chain corresponds to 119–126; the sequence is EEMDSVHT.

Its subcellular location is the membrane. This is an uncharacterized protein from Saccharomyces cerevisiae (strain ATCC 204508 / S288c) (Baker's yeast).